An 85-amino-acid polypeptide reads, in one-letter code: ATP synthase subunit c (85 aa).

Transmembrane regions (helical) follow at residues 10–30 (IAVS…FGIL) and 53–73 (FIVA…ALLF).

It belongs to the ATPase C chain family. As to quaternary structure, F-type ATPases have 2 components, F(1) - the catalytic core - and F(0) - the membrane proton channel. F(1) has five subunits: alpha(3), beta(3), gamma(1), delta(1), epsilon(1). F(0) has three main subunits: a(1), b(2) and c(10-14). The alpha and beta chains form an alternating ring which encloses part of the gamma chain. F(1) is attached to F(0) by a central stalk formed by the gamma and epsilon chains, while a peripheral stalk is formed by the delta and b chains.

Its subcellular location is the cell inner membrane. Functionally, f(1)F(0) ATP synthase produces ATP from ADP in the presence of a proton or sodium gradient. F-type ATPases consist of two structural domains, F(1) containing the extramembraneous catalytic core and F(0) containing the membrane proton channel, linked together by a central stalk and a peripheral stalk. During catalysis, ATP synthesis in the catalytic domain of F(1) is coupled via a rotary mechanism of the central stalk subunits to proton translocation. Its function is as follows. Key component of the F(0) channel; it plays a direct role in translocation across the membrane. A homomeric c-ring of between 10-14 subunits forms the central stalk rotor element with the F(1) delta and epsilon subunits. This Idiomarina loihiensis (strain ATCC BAA-735 / DSM 15497 / L2-TR) protein is ATP synthase subunit c.